A 917-amino-acid chain; its full sequence is Low-density lipoprotein receptor-related protein 8 (917 aa).

A signal peptide spans 1–24 (MCRPALARLLLLQLLLLKLYLGKG). Residues 25–838 (AMKECDKDQF…GQGFDSTVTA (814 aa)) are Extracellular-facing. LDL-receptor class A domains follow at residues 28–64 (ECDKDQFQCRNERCIPAVWACDEDNDCSDNSDEADCP), 67–105 (TCAETDFACDNGHCIPDRWKCDGEEECSDGSDESEAACT), 108–146 (VCPAEKISCGDLSNKCIPSSWRCDGQKDCESGIDEAGCA), 148–184 (ACSPDEFQCSNKTCISINFVCDGYNNCGDGSDEKKCS), and 187–225 (TCSPNEFQCNNSVCIPQLWVCDNQADCEDHSDESIERCG). 29 cysteine pairs are disulfide-bonded: C29–C41, C36–C54, C48–C63, C68–C80, C75–C93, C87–C104, C109–C123, C116–C136, C130–C145, C149–C161, C156–C174, C168–C183, C188–C200, C195–C213, C207–C224, C241–C259, C253–C268, C273–C285, C280–C298, C292–C307, C313–C326, C321–C339, C333–C350, C355–C366, C362–C375, C377–C389, C395–C405, C401–C414, and C416–C429. Ca(2+) is bound by residues W46, D49, D51, D53, D59, and E60. Residue N158 is glycosylated (N-linked (GlcNAc...) asparagine). N-linked (GlcNAc...) asparagine glycosylation occurs at N196. 2 LDL-receptor class A domains span residues 272 to 308 (TCRPDEFQCGDGTCIHGAKQCDKVHDCPDNSDEAGCV) and 312 to 351 (ACESPSKFQCKSGECIDGGKVCDLHRDCRDWSDEPLKECG). The 45-residue stretch at 346-390 (PLKECGINECSLNNGGCSHICKDLKIGYECECPPGYKLLDKKTCG) folds into the EGF-like 1 domain. In terms of domain architecture, EGF-like 2; calcium-binding spans 391–430 (DIDECENPDACSQICINYKGDYKCECYEGYEMDTLSKNCK). 5 LDL-receptor class B repeats span residues 476–522 (NRIY…DWVH), 523–565 (KNIY…DPTR), 566–609 (RFMY…DLLN), 610–652 (QRLY…AVFE), and 653–695 (DRVF…FHEL). A glycan (N-linked (GlcNAc...) asparagine) is linked at N532. An N-linked (GlcNAc...) asparagine glycan is attached at N628. The clustered O-linked oligosaccharides stretch occupies residues 754–813 (TTPATVEVPTTTTSHPAATSTVTVTGSANTTTAVIPRAVSEATTAIPSSHSTTSLLIDSE). N-linked (GlcNAc...) asparagine glycans are attached at residues N782 and N820. The helical transmembrane segment at 839-861 (AVIGIVIPVVVIGLLCMGGYLIW) threads the bilayer. The Cytoplasmic segment spans residues 862–917 (RNWKRKNTKSMNFDNPVYRKTTEEEDEDEIHIGRTAQIGHVYPARVALSLEDDGLP).

It belongs to the LDLR family. As to quaternary structure, homooligomer. As to expression, mainly in brain.

The protein resides in the cell membrane. Cell surface receptor for Reelin (RELN) and apolipoprotein E (apoE)-containing ligands. Also binds alpha2-macroglobulin. LRP8 participates in transmitting the extracellular Reelin signal to intracellular signaling processes, by binding to DAB1 on its cytoplasmic tail. Reelin acts via both the VLDL receptor (VLDLR) and LRP8 to regulate DAB1 tyrosine phosphorylation and microtubule function in neurons. LRP8 has higher affinity for Reelin than VLDLR. LRP8 is thus a key component of the Reelin pathway which governs neuronal layering of the forebrain during embryonic brain development. Not required for endocytic uptake of SEPP1 in the kidney which is mediated by LRP2. This chain is Low-density lipoprotein receptor-related protein 8 (LRP8), found in Gallus gallus (Chicken).